The chain runs to 150 residues: UPF0178 protein Daro_2879 (150 aa).

This sequence belongs to the UPF0178 family.

This Dechloromonas aromatica (strain RCB) protein is UPF0178 protein Daro_2879.